The sequence spans 345 residues: Phosphoribosylformylglycinamidine cyclo-ligase (345 aa).

Belongs to the AIR synthase family.

Its subcellular location is the cytoplasm. It carries out the reaction 2-formamido-N(1)-(5-O-phospho-beta-D-ribosyl)acetamidine + ATP = 5-amino-1-(5-phospho-beta-D-ribosyl)imidazole + ADP + phosphate + H(+). Its pathway is purine metabolism; IMP biosynthesis via de novo pathway; 5-amino-1-(5-phospho-D-ribosyl)imidazole from N(2)-formyl-N(1)-(5-phospho-D-ribosyl)glycinamide: step 2/2. The polypeptide is Phosphoribosylformylglycinamidine cyclo-ligase (Escherichia coli O127:H6 (strain E2348/69 / EPEC)).